Reading from the N-terminus, the 272-residue chain is MKRTAFYLSDGTGITAETLGHSMLSQFGSIEFIQVTLPFVQSDEQTREAVARINKAAKEDGAKPVVFSTLVNTDHRAILHGCDALILDLFGAFLRPLEDELGVRSSHKINQSHAIRDAESYRIRINAVHFALDNDDGARTRHYDQADIILIGVSRSGKTPTCLYLALQFGLFTANYPLTEDDFDDLRLPKALMEHKHKLFGLTIDADRLSAIRSERKAGSKYASPRQCDMELRALEAMYNKHNIPYLDATELSIEEISTRVLAMKGLKRRLQ.

152–159 is a binding site for ADP; the sequence is GVSRSGKT.

This sequence belongs to the pyruvate, phosphate/water dikinase regulatory protein family. PSRP subfamily.

It carries out the reaction [pyruvate, water dikinase] + ADP = [pyruvate, water dikinase]-phosphate + AMP + H(+). The enzyme catalyses [pyruvate, water dikinase]-phosphate + phosphate + H(+) = [pyruvate, water dikinase] + diphosphate. Functionally, bifunctional serine/threonine kinase and phosphorylase involved in the regulation of the phosphoenolpyruvate synthase (PEPS) by catalyzing its phosphorylation/dephosphorylation. The protein is Putative phosphoenolpyruvate synthase regulatory protein of Alcanivorax borkumensis (strain ATCC 700651 / DSM 11573 / NCIMB 13689 / SK2).